Reading from the N-terminus, the 161-residue chain is Transcription elongation factor GreA (161 aa).

Residues 43 to 68 (SENAEYEAAREKQAFVEARIKHLEDI) adopt a coiled-coil conformation.

It belongs to the GreA/GreB family.

Necessary for efficient RNA polymerase transcription elongation past template-encoded arresting sites. The arresting sites in DNA have the property of trapping a certain fraction of elongating RNA polymerases that pass through, resulting in locked ternary complexes. Cleavage of the nascent transcript by cleavage factors such as GreA or GreB allows the resumption of elongation from the new 3'terminus. GreA releases sequences of 2 to 3 nucleotides. The chain is Transcription elongation factor GreA from Rickettsia bellii (strain OSU 85-389).